The chain runs to 184 residues: Protein Syd (184 aa).

The protein belongs to the Syd family.

The protein localises to the cell inner membrane. In terms of biological role, interacts with the SecY protein in vivo. May bind preferentially to an uncomplexed state of SecY, thus functioning either as a chelating agent for excess SecY in the cell or as a regulatory factor that negatively controls the translocase function. The chain is Protein Syd from Psychromonas ingrahamii (strain DSM 17664 / CCUG 51855 / 37).